We begin with the raw amino-acid sequence, 271 residues long: MNVALIDPTARVADGAWLADDVEVGPYCIVGPDVTLEDGVRLHAHVNVQGVTTLGARTQVYPFASLGTPPQSVHYKGEKTSLVVGTDCQIREHVTMNTGTASGRGVTRVGNNCMLMTAAHVAHDCLVGDNVIFANNATLGGHVEVGDNVFLGGLSAVHQFVRIGAQVMIGGVTGVREDVIPFGYAIGQNANLVGLNVVGMKRRGFSKSELHAARAAYRDLFFGEGTFAERLAGLRERQDASPFIKALVSFVDAGGKRALCHPSRGVVAQED.

The protein belongs to the transferase hexapeptide repeat family. LpxA subfamily. As to quaternary structure, homotrimer.

The protein resides in the cytoplasm. The catalysed reaction is a (3R)-hydroxyacyl-[ACP] + UDP-N-acetyl-alpha-D-glucosamine = a UDP-3-O-[(3R)-3-hydroxyacyl]-N-acetyl-alpha-D-glucosamine + holo-[ACP]. It functions in the pathway glycolipid biosynthesis; lipid IV(A) biosynthesis; lipid IV(A) from (3R)-3-hydroxytetradecanoyl-[acyl-carrier-protein] and UDP-N-acetyl-alpha-D-glucosamine: step 1/6. Functionally, involved in the biosynthesis of lipid A, a phosphorylated glycolipid that anchors the lipopolysaccharide to the outer membrane of the cell. This chain is Acyl-[acyl-carrier-protein]--UDP-N-acetylglucosamine O-acyltransferase, found in Azorhizobium caulinodans (strain ATCC 43989 / DSM 5975 / JCM 20966 / LMG 6465 / NBRC 14845 / NCIMB 13405 / ORS 571).